The following is a 161-amino-acid chain: Cytochrome c-type biogenesis protein CcmE (161 aa).

Over 1 to 8 the chain is Cytoplasmic; sequence MNARRKKR. Residues 9-29 traverse the membrane as a helical; Signal-anchor for type II membrane protein segment; that stretch reads LTLAVALIGGVAAIASLLLYA. Residues 30 to 161 lie on the Periplasmic side of the membrane; that stretch reads LNSNLNLFYT…DYNEQQKTSY (132 aa). Residues His-131 and Tyr-135 each coordinate heme.

Belongs to the CcmE/CycJ family.

The protein resides in the cell inner membrane. In terms of biological role, heme chaperone required for the biogenesis of c-type cytochromes. Transiently binds heme delivered by CcmC and transfers the heme to apo-cytochromes in a process facilitated by CcmF and CcmH. The sequence is that of Cytochrome c-type biogenesis protein CcmE from Shewanella sediminis (strain HAW-EB3).